Reading from the N-terminus, the 315-residue chain is Small ribosomal subunit biogenesis GTPase RsgA (315 aa).

A CP-type G domain is found at 79–243 (LSKESHILGA…LIDTPGIKGF (165 aa)). GTP is bound by residues 128-131 (NKID) and 182-190 (GHSGVGKSS). 4 residues coordinate Zn(2+): Cys267, Cys272, His274, and Cys280.

This sequence belongs to the TRAFAC class YlqF/YawG GTPase family. RsgA subfamily. In terms of assembly, monomer. Associates with 30S ribosomal subunit, binds 16S rRNA. Zn(2+) is required as a cofactor.

It localises to the cytoplasm. Its function is as follows. One of several proteins that assist in the late maturation steps of the functional core of the 30S ribosomal subunit. Helps release RbfA from mature subunits. May play a role in the assembly of ribosomal proteins into the subunit. Circularly permuted GTPase that catalyzes slow GTP hydrolysis, GTPase activity is stimulated by the 30S ribosomal subunit. The polypeptide is Small ribosomal subunit biogenesis GTPase RsgA (Porphyromonas gingivalis (strain ATCC BAA-308 / W83)).